The following is a 113-amino-acid chain: UPF0122 protein Lreu_1156 (113 aa).

This sequence belongs to the UPF0122 family.

Might take part in the signal recognition particle (SRP) pathway. This is inferred from the conservation of its genetic proximity to ftsY/ffh. May be a regulatory protein. The chain is UPF0122 protein Lreu_1156 from Limosilactobacillus reuteri (strain DSM 20016) (Lactobacillus reuteri).